The primary structure comprises 355 residues: Putative inositol monophosphatase 3 (355 aa).

The chain crosses the membrane as a helical span at residues 16 to 36 (VPATIFAILLTIVLVYFLNFH). Mg(2+) contacts are provided by glutamate 127, aspartate 167, leucine 169, aspartate 170, and aspartate 292. Glutamate 127 serves as a coordination point for substrate. Residues 169–172 (LDAT) and aspartate 292 each bind substrate.

Belongs to the inositol monophosphatase superfamily. Requires Mg(2+) as cofactor.

It is found in the membrane. It catalyses the reaction a myo-inositol phosphate + H2O = myo-inositol + phosphate. The protein operates within polyol metabolism; myo-inositol biosynthesis; myo-inositol from D-glucose 6-phosphate: step 2/2. The chain is Putative inositol monophosphatase 3 from Drosophila pseudoobscura pseudoobscura (Fruit fly).